The following is a 454-amino-acid chain: Guanine deaminase (454 aa).

Zn(2+)-binding residues include His-82 and His-84. Residues 84–87, 213–214, 240–243, and Asp-330 contribute to the substrate site; these read HASQ, RF, and HISE. His-240 and Asp-330 together coordinate Zn(2+). Ser-453 carries the post-translational modification Phosphoserine.

The protein belongs to the metallo-dependent hydrolases superfamily. ATZ/TRZ family. Homodimer. Zn(2+) serves as cofactor.

It catalyses the reaction guanine + H2O + H(+) = xanthine + NH4(+). The protein operates within purine metabolism; guanine degradation; xanthine from guanine: step 1/1. Its function is as follows. Catalyzes the hydrolytic deamination of guanine, producing xanthine and ammonia. This is Guanine deaminase from Homo sapiens (Human).